Consider the following 394-residue polypeptide: Ornithine aminotransferase 1 (394 aa).

Position 252 is an N6-(pyridoxal phosphate)lysine (K252).

It belongs to the class-III pyridoxal-phosphate-dependent aminotransferase family. OAT subfamily. Requires pyridoxal 5'-phosphate as cofactor.

Its subcellular location is the cytoplasm. It carries out the reaction a 2-oxocarboxylate + L-ornithine = L-glutamate 5-semialdehyde + an L-alpha-amino acid. It participates in amino-acid biosynthesis; L-proline biosynthesis; L-glutamate 5-semialdehyde from L-ornithine: step 1/1. In terms of biological role, catalyzes the interconversion of ornithine to glutamate semialdehyde. The sequence is that of Ornithine aminotransferase 1 from Staphylococcus aureus (strain MRSA252).